A 280-amino-acid chain; its full sequence is UDP-3-O-acyl-N-acetylglucosamine deacetylase (280 aa).

Positions 77, 238, and 242 each coordinate Zn(2+). His-265 acts as the Proton donor in catalysis.

It belongs to the LpxC family. The cofactor is Zn(2+).

The catalysed reaction is a UDP-3-O-[(3R)-3-hydroxyacyl]-N-acetyl-alpha-D-glucosamine + H2O = a UDP-3-O-[(3R)-3-hydroxyacyl]-alpha-D-glucosamine + acetate. It functions in the pathway glycolipid biosynthesis; lipid IV(A) biosynthesis; lipid IV(A) from (3R)-3-hydroxytetradecanoyl-[acyl-carrier-protein] and UDP-N-acetyl-alpha-D-glucosamine: step 2/6. Functionally, catalyzes the hydrolysis of UDP-3-O-myristoyl-N-acetylglucosamine to form UDP-3-O-myristoylglucosamine and acetate, the committed step in lipid A biosynthesis. The protein is UDP-3-O-acyl-N-acetylglucosamine deacetylase of Trichormus variabilis (strain ATCC 29413 / PCC 7937) (Anabaena variabilis).